We begin with the raw amino-acid sequence, 486 residues long: Transcription factor VOZ1 (486 aa).

Residues 208–405 (PPSAFLGPKC…VDGKKTSKGK (198 aa)) form a VOZ region. Residues Cys-217, Cys-222, Cys-236, and His-240 each coordinate Zn(2+). Residues 217–240 (CALWDCPRPAQGFDWFQDYCSSFH) form a C3H1-type; atypical zinc finger. The disordered stretch occupies residues 424 to 445 (EFPPENNTTNTTNNNKRCIKGR). Low complexity predominate over residues 429 to 438 (NNTTNTTNNN).

As to quaternary structure, homodimer. Interacts with phytochrome B (phyB). As to expression, ubiquitous. Expressed in the vascular bundles of various tissues, specifically in the phloem.

It is found in the cytoplasm. The protein localises to the nucleus. Transcriptional activator acting positively in the phytochrome B signaling pathway. Functions redundantly with VOZ2 to promote flowering downstream of phytochrome B (phyB). Down-regulates 'FLOWERING LOCUS C' (FLC) and up-regulates 'FLOWERING LOCUS T' (FT). Binds to the 38-bp cis-acting region of the AVP1 gene. Interacts with phyB in the cytoplasm and is translocated to the nucleus at signal transmission, where it is subjected to degradation in a phytochrome-dependent manner. This chain is Transcription factor VOZ1 (VOZ1), found in Arabidopsis thaliana (Mouse-ear cress).